The primary structure comprises 175 residues: Nucleoside triphosphate/diphosphate phosphatase (175 aa).

Arg23 (proton donor) is an active-site residue. The Mg(2+) site is built by Asn87, Asp103, Asp105, Asp107, Asp120, and Glu123.

The protein belongs to the Ntdp family. Mg(2+) serves as cofactor.

It catalyses the reaction a ribonucleoside 5'-triphosphate + H2O = a ribonucleoside 5'-diphosphate + phosphate + H(+). It carries out the reaction a ribonucleoside 5'-diphosphate + H2O = a ribonucleoside 5'-phosphate + phosphate + H(+). In terms of biological role, has nucleoside phosphatase activity towards nucleoside triphosphates and nucleoside diphosphates. In Listeria monocytogenes serotype 4b (strain CLIP80459), this protein is Nucleoside triphosphate/diphosphate phosphatase.